The following is a 292-amino-acid chain: Ribosomal RNA small subunit methyltransferase A (292 aa).

The S-adenosyl-L-methionine site is built by N28, L30, G55, E76, D101, and N126.

Belongs to the class I-like SAM-binding methyltransferase superfamily. rRNA adenine N(6)-methyltransferase family. RsmA subfamily.

The protein resides in the cytoplasm. It catalyses the reaction adenosine(1518)/adenosine(1519) in 16S rRNA + 4 S-adenosyl-L-methionine = N(6)-dimethyladenosine(1518)/N(6)-dimethyladenosine(1519) in 16S rRNA + 4 S-adenosyl-L-homocysteine + 4 H(+). In terms of biological role, specifically dimethylates two adjacent adenosines (A1518 and A1519) in the loop of a conserved hairpin near the 3'-end of 16S rRNA in the 30S particle. May play a critical role in biogenesis of 30S subunits. The sequence is that of Ribosomal RNA small subunit methyltransferase A from Bacillus thuringiensis (strain Al Hakam).